The sequence spans 257 residues: Ribonuclease HII (257 aa).

Residues 72–257 (ERVAGIDEVG…FSPVQKILQA (186 aa)) form the RNase H type-2 domain. A divalent metal cation is bound by residues aspartate 78, glutamate 79, and aspartate 170.

It belongs to the RNase HII family. Mn(2+) is required as a cofactor. It depends on Mg(2+) as a cofactor.

It localises to the cytoplasm. The catalysed reaction is Endonucleolytic cleavage to 5'-phosphomonoester.. Its function is as follows. Endonuclease that specifically degrades the RNA of RNA-DNA hybrids. The sequence is that of Ribonuclease HII from Levilactobacillus brevis (strain ATCC 367 / BCRC 12310 / CIP 105137 / JCM 1170 / LMG 11437 / NCIMB 947 / NCTC 947) (Lactobacillus brevis).